Consider the following 141-residue polypeptide: Large ribosomal subunit protein uL16 (141 aa).

It belongs to the universal ribosomal protein uL16 family. Part of the 50S ribosomal subunit.

Functionally, binds 23S rRNA and is also seen to make contacts with the A and possibly P site tRNAs. In Geobacillus kaustophilus (strain HTA426), this protein is Large ribosomal subunit protein uL16.